Reading from the N-terminus, the 212-residue chain is Probable GTP-binding protein EngB (212 aa).

Residues 23–197 (TGIEVAFAGR…ERILDGWFGL (175 aa)) form the EngB-type G domain. GTP-binding positions include 31-38 (GRSNAGKS), 58-62 (GRTQL), 76-79 (DLPG), 143-146 (TKAD), and 176-178 (FSS). Residues serine 38 and threonine 60 each contribute to the Mg(2+) site.

This sequence belongs to the TRAFAC class TrmE-Era-EngA-EngB-Septin-like GTPase superfamily. EngB GTPase family. The cofactor is Mg(2+).

In terms of biological role, necessary for normal cell division and for the maintenance of normal septation. The polypeptide is Probable GTP-binding protein EngB (Alteromonas mediterranea (strain DSM 17117 / CIP 110805 / LMG 28347 / Deep ecotype)).